The following is a 499-amino-acid chain: Citrinin biosynthesis cluster MFS transporter mrr1 (499 aa).

Residues Met1–Lys29 form a disordered region. 8 consecutive transmembrane segments (helical) span residues Ser58–Phe78, Val95–Gly115, Leu124–Ala144, Phe155–Phe175, Leu187–Val207, Trp215–Leu235, Ile291–Val311, and Gly327–Val347. Asn361 carries N-linked (GlcNAc...) asparagine glycosylation. Helical transmembrane passes span Leu370–Thr390, Ile395–Trp415, Ala443–Trp463, and Leu467–Ala487.

It belongs to the major facilitator superfamily. CAR1 family.

The protein localises to the membrane. Its function is as follows. MFS transporter; part of the gene cluster that mediates the biosynthesis the mycotoxin citrinin, a hepato-nephrotoxic compound to humans due to inhibition of respiration complex III. In Monascus ruber (Mold), this protein is Citrinin biosynthesis cluster MFS transporter mrr1.